The primary structure comprises 1376 residues: Protein FAM135B (1376 aa).

Over residues 431-442 (NEDECEFSEESP) the composition is skewed to acidic residues. Positions 431-489 (NEDECEFSEESPSENTHVGSKPHSIQSTTVHENASFEKPNVGTKAQEDCSTEGPEQGFD) are disordered. Residues 443-462 (SENTHVGSKPHSIQSTTVHE) are compositionally biased toward polar residues.

It belongs to the FAM135 family.

This is Protein FAM135B (fam135b) from Xenopus laevis (African clawed frog).